Reading from the N-terminus, the 210-residue chain is Outer-membrane lipoprotein carrier protein (210 aa).

The first 26 residues, 1 to 26, serve as a signal peptide directing secretion; sequence MHMIRRAAGALAVFAVAALAAAPAWA.

It belongs to the LolA family. As to quaternary structure, monomer.

The protein localises to the periplasm. Its function is as follows. Participates in the translocation of lipoproteins from the inner membrane to the outer membrane. Only forms a complex with a lipoprotein if the residue after the N-terminal Cys is not an aspartate (The Asp acts as a targeting signal to indicate that the lipoprotein should stay in the inner membrane). This chain is Outer-membrane lipoprotein carrier protein, found in Bordetella pertussis (strain Tohama I / ATCC BAA-589 / NCTC 13251).